The primary structure comprises 689 residues: Beta-adrenergic receptor kinase 1 (689 aa).

An N-terminal region spans residues 1-190; the sequence is MADLEAVLAD…ELNIHLTMND (190 aa). In terms of domain architecture, RGS spans 54–175; that stretch reads TFEKIFSQKL…IESEKFTRFC (122 aa). The region spanning 191–453 is the Protein kinase domain; sequence FSVHRIIGRG…AQEVKEDPFF (263 aa). ATP-binding positions include 197 to 205 and K220; that span reads IGRGGFGEV. Residue D317 is the Proton acceptor of the active site. An AGC-kinase C-terminal domain is found at 454–521; it reads KAVDWQMVLL…TISERWQQEV (68 aa). In terms of domain architecture, PH spans 558-652; the sequence is DCIMHGYMSK…WKKELRDVYR (95 aa). The segment at 665-689 is disordered; that stretch reads KNKPRSPVVELSKMPLTQRGSANGL. Residue S670 is modified to Phosphoserine.

The protein belongs to the protein kinase superfamily. AGC Ser/Thr protein kinase family. GPRK subfamily. As to quaternary structure, interacts with the heterodimer formed by GNB1 and GNG2. Interacts with GIT1. Interacts with, and phosphorylates chemokine-stimulated CCR5. Interacts with ARRB1. Interacts with LPAR1 and LPAR2. Interacts with RALA in response to LPAR1 activation. ADRBK1 and RALA mutually inhibit each other's binding to LPAR1. Interacts with ADRB2.

It is found in the cytoplasm. Its subcellular location is the cell membrane. The protein resides in the postsynapse. The protein localises to the presynapse. It catalyses the reaction [beta-adrenergic receptor] + ATP = [beta-adrenergic receptor]-phosphate + ADP + H(+). In contrast to other AGC family kinases, the catalytic activity is solely regulated by the binding of substrates and ligands, not by phosphorylation of the kinase domain. Its function is as follows. Specifically phosphorylates the agonist-occupied form of the beta-adrenergic and closely related receptors, probably inducing a desensitization of them. Does not act on HTR1B/5-hydroxytryptamine 1B receptor. Key regulator of LPAR1 signaling. Competes with RALA for binding to LPAR1 thus affecting the signaling properties of the receptor. Desensitizes LPAR1 and LPAR2 in a phosphorylation-independent manner. Inhibits relaxation of airway smooth muscle in response to blue light. This chain is Beta-adrenergic receptor kinase 1, found in Didelphis virginiana (North American opossum).